We begin with the raw amino-acid sequence, 201 residues long: MTVKSEGVLLVLSSPSGAGKTTISAKLLEQSTNLVRSVSMTTRKPRPGEINGKDYFFVTEEKFHELCKAGQMLEYAKVFENFYGIPRDFIEQNLSSGISVLLSIDWQGAFHLFKLMRKKVVSVFILPPSMEELRLRLQKRNSDDASEIERRLAEAQKEISKRDKYDYVIINDDIDKSVEEISSILNKERLKKLKEKPSLED.

The 180-residue stretch at 7 to 186 (GVLLVLSSPS…SVEEISSILN (180 aa)) folds into the Guanylate kinase-like domain. Position 14–21 (14–21 (SPSGAGKT)) interacts with ATP.

Belongs to the guanylate kinase family.

The protein resides in the cytoplasm. It catalyses the reaction GMP + ATP = GDP + ADP. Its function is as follows. Essential for recycling GMP and indirectly, cGMP. The sequence is that of Guanylate kinase from Wolbachia pipientis wMel.